A 405-amino-acid polypeptide reads, in one-letter code: MEEVISASLADIMLAMNGEKFFVENWKVEVTPAALTVVNTSEVPVQDPRCTIITLPFSVWSAMECMLCRFQPANQLHVACKLFDTTFILQNQDLDQSRYVVVETVVSDLKKPISFSLVSEGRALAEGELRLVLTPLRALDYVHVFSVIYNMHNELPPGLELASVTEYCGSLVKELCGTAIRTRANTYTMAFKWEGARQFYRVTNSYFCEQYNRFKIVRLCVKECKMYRKEGNVHVLDITVVGDTQPEMVHGVVSVMGAEVDSMLVTDRYISPLYNQAWGWALPLYAPTQVVVPPKKTLKVPVDGMFFRGTVPGAQPVCLIGGSNINPDLVVRPVVWKPMTSLVLTLYNNSERPLAIRRGDLAALAVPVNSTDIRTVYSDNSGTLITWDTGTCEPVEQEEEEEARA.

This is an uncharacterized protein from Equine herpesvirus 2 (strain 86/87) (EHV-2).